The chain runs to 1026 residues: Beta-galactosidase (1026 aa).

Residues asparagine 104 and aspartate 203 each contribute to the substrate site. Aspartate 203 is a binding site for Na(+). Glutamate 418, histidine 420, and glutamate 463 together coordinate Mg(2+). Substrate is bound by residues glutamate 463 and 539-542 (EYAH). The Proton donor role is filled by glutamate 463. The active-site Nucleophile is the glutamate 539. Asparagine 599 contacts Mg(2+). Phenylalanine 603 and asparagine 606 together coordinate Na(+). Residues asparagine 606 and tryptophan 1002 each coordinate substrate.

The protein belongs to the glycosyl hydrolase 2 family. As to quaternary structure, homotetramer. Mg(2+) is required as a cofactor. Na(+) serves as cofactor.

It carries out the reaction Hydrolysis of terminal non-reducing beta-D-galactose residues in beta-D-galactosides.. In Erwinia tasmaniensis (strain DSM 17950 / CFBP 7177 / CIP 109463 / NCPPB 4357 / Et1/99), this protein is Beta-galactosidase.